The sequence spans 143 residues: Shadow of prion protein (143 aa).

The signal sequence occupies residues 1-24 (MNWAAAVCWALLLAATFLCDGSAA). A glycan (N-linked (GlcNAc...) asparagine) is linked at asparagine 103. Serine 117 is lipidated: GPI-anchor amidated serine. A propeptide spans 118–143 (GTGPTGHRHLCPLLGGALGALRLLRP) (removed in mature form).

Belongs to the SPRN family. N-glycosylated. As to expression, mainly expressed in brain.

It localises to the cell membrane. Functionally, prion-like protein that has PrP(C)-like neuroprotective activity. May act as a modulator for the biological actions of normal and abnormal PrP. In Bos taurus (Bovine), this protein is Shadow of prion protein (SPRN).